We begin with the raw amino-acid sequence, 105 residues long: Nucleoid-associated protein Lm4b_02677 (105 aa).

Residues 1 to 16 (MRGMGNMQGMMKQMQK) are compositionally biased toward low complexity. Residues 1–23 (MRGMGNMQGMMKQMQKMQKEMAK) are disordered.

It belongs to the YbaB/EbfC family. Homodimer.

The protein resides in the cytoplasm. It localises to the nucleoid. Binds to DNA and alters its conformation. May be involved in regulation of gene expression, nucleoid organization and DNA protection. This chain is Nucleoid-associated protein Lm4b_02677, found in Listeria monocytogenes serotype 4b (strain CLIP80459).